Consider the following 859-residue polypeptide: Anoctamin-7 (859 aa).

The Cytoplasmic portion of the chain corresponds to 1–297 (MLRGQAREED…YFAWLGFYTG (297 aa)). The disordered stretch occupies residues 25 to 50 (GCSYGSTAQASEAGKQQVAPSRVGSS). The helical transmembrane segment at 298–318 (WLLPAAVVGTVVFLVGCFLVF) threads the bilayer. The Extracellular portion of the chain corresponds to 319–362 (SDIPTQELCHSSDSFDMCPLCSDCSFWLLSSACTLAQAGRLFDH). Residues 363–383 (GGTVFFSLFMALWAVLLLEYW) form a helical membrane-spanning segment. At 384–441 (KRKNATLAYRWDCSDYEDIEERPRPQFAATAPMTALNPITGEDEPYFPEKNRVRRMLA) the chain is on the cytoplasmic side. The helical transmembrane segment at 442–462 (GSVVLLMMVAVVIMCLVSVIL) threads the bilayer. The Extracellular portion of the chain corresponds to 463-492 (YRAVMAIIVSRSDNAFLSAWASRIASLTGS). The helical transmembrane segment at 493-513 (VVNLVFILILSKVYVLLAQVL) threads the bilayer. Residues 514–530 (TRWEMHRTQTEFEDAFT) are Cytoplasmic-facing. Residues 531-551 (LKVFIFQFVNFYASPVYIAFF) form a helical membrane-spanning segment. Over 552-651 (KGRFVGYPGN…FHEYLEMVLQ (100 aa)) the chain is Extracellular. Residues 652–672 (FGFVTIFVAACPLAPLFALLN) traverse the membrane as a helical segment. The Cytoplasmic segment spans residues 673 to 700 (NWVEIRLDARKFVCEYRRPVAERAQDIG). Residues 701–721 (IWFHILTGLTHLAVISNAFLL) traverse the membrane as a helical segment. At 722 to 780 (AFSSDFLPRVYYSWTHAPDLHGFLNFTLARAPPTFTSAHNRTCRYRAFRDDDGHYSPTY) the chain is on the extracellular side. N-linked (GlcNAc...) asparagine glycans are attached at residues N746 and N761. A helical membrane pass occupies residues 781-801 (WTLLAIRLAFVIVFEHVVFSI). Topologically, residues 802–859 (GRVLDLLVPDIPESVEIKVKREYYLAKQALAENEALLGATGVKDDQPPSSEPSLGLPA) are cytoplasmic.

Belongs to the anoctamin family. As to expression, highly expressed in the stomach. Expressed at low levels in small intestine and large intestine.

It is found in the cell membrane. It localises to the endoplasmic reticulum. It carries out the reaction a 1,2-diacyl-sn-glycero-3-phospho-L-serine(in) = a 1,2-diacyl-sn-glycero-3-phospho-L-serine(out). The enzyme catalyses a beta-D-galactosyl-(1&lt;-&gt;1')-N-acylsphing-4-enine(out) = a beta-D-galactosyl-(1&lt;-&gt;1')-N-acylsphing-4-enine(in). The catalysed reaction is a 1,2-diacyl-sn-glycero-3-phosphocholine(in) = a 1,2-diacyl-sn-glycero-3-phosphocholine(out). Its function is as follows. Has calcium-dependent phospholipid scramblase activity; scrambles phosphatidylserine, phosphatidylcholine and galactosylceramide. Does not exhibit calcium-activated chloride channel (CaCC) activity. May play a role in cell-cell interactions. This Mus musculus (Mouse) protein is Anoctamin-7 (Ano7).